The chain runs to 498 residues: MSLADELLADLEEAAEEEEENLIDEDDLETIEEVDEEMQVDLNAESVKSIAKLSDSKLFSEILLKIEGYIQKQPKASEVMGPVEAAPEYKVIVDANNLTVEIENELNIIHKFIRDKYSKRFPELESLVPNALDYIRTVKELGNNLDKCKNNENLQQILTNATIMVVSVTASTTQGQQLTDEELERIEEACDMALELNQSKHRIYEYVESRMSFIAPNLSIIVGASTAAKIMGIAGGLTNLSKMPACNVMLLGAQRKTLTGFSSTSVLPHTGYIYHSEIVQSLPSDLHRKAARLVSAKCTLASRVDSFHENPEGKIGYDLKEEIERKFDKWQEPPPVKQVKPLPAPLDGQRKKRGGRRYRKMKERLGLTEIRKQANRMSFGEIEEDAYQEDLGFSLGHLGKSGSGRIRQAQVNEATKARISKTLQRTLQKQSVVYGGKSTVRDRSSGTASSVAFTPLQGLEIVNPQAAEKKVAEANQKYFSSMAEFLKVKSEKSGTMTQ.

The tract at residues 1–24 (MSLADELLADLEEAAEEEEENLID) is disordered. Acidic residues predominate over residues 7-24 (LLADLEEAAEEEEENLID). 2 coiled-coil regions span residues 84-119 (EAAP…KYSK) and 180-214 (DEEL…MSFI). One can recognise a Nop domain in the interval 214-332 (IAPNLSIIVG…IERKFDKWQE (119 aa)). Residues 333–356 (PPPVKQVKPLPAPLDGQRKKRGGR) form a disordered region. The short motif at 350-363 (RKKRGGRRYRKMKE) is the Nuclear localization signal (NLS) element.

This sequence belongs to the PRP31 family. In terms of assembly, identified in the spliceosome B complex. Component of the U4/U6-U5 tri-snRNP complex. Component of some MLL1/MLL complex.

It localises to the nucleus. The protein localises to the nucleus speckle. The protein resides in the cajal body. In terms of biological role, involved in pre-mRNA splicing as component of the spliceosome. Required for the assembly of the U4/U5/U6 tri-snRNP complex, one of the building blocks of the spliceosome. The sequence is that of U4/U6 small nuclear ribonucleoprotein Prp31 (prpf31) from Xenopus laevis (African clawed frog).